A 485-amino-acid chain; its full sequence is Protein disulfide isomerase-like 5-4 (485 aa).

Positions valine 114–alanine 263 constitute a Thioredoxin domain. Cysteine 170 acts as the Nucleophile in catalysis. A helical transmembrane segment spans residues phenylalanine 444–isoleucine 464.

This sequence belongs to the protein disulfide isomerase family.

The protein resides in the membrane. Functionally, acts as a protein-folding catalyst that interacts with nascent polypeptides to catalyze the formation, isomerization, and reduction or oxidation of disulfide bonds. May play a role in storage protein biogenesis. The chain is Protein disulfide isomerase-like 5-4 (PDIL5-4) from Oryza sativa subsp. japonica (Rice).